Consider the following 603-residue polypeptide: Matrix metalloproteinase-17 (603 aa).

The first 35 residues, 1 to 35 (MRRRAARGPGPPPPGPGLSRLPLPLLLLLALGTRG), serve as a signal peptide directing secretion. Positions 36-125 (GCAAPAPAPR…PVLTQARRRR (90 aa)) are excised as a propeptide. A Cysteine switch motif is present at residues 108–115 (PRCSLPDL). Cysteine 110 is a Zn(2+) binding site. Asparagine 137 carries an N-linked (GlcNAc...) asparagine glycan. A Zn(2+)-binding site is contributed by histidine 248. The active site involves glutamate 249. Zn(2+)-binding residues include histidine 252 and histidine 258. The tract at residues 301–329 (SPTAQPEEPPLLPEPPDNRSSAPPRKDVP) is disordered. N-linked (GlcNAc...) asparagine glycosylation occurs at asparagine 318. Cysteines 332 and 523 form a disulfide. Hemopexin repeat units lie at residues 333 to 378 (STHF…WRGL), 382 to 427 (LDSV…FSLP), 428 to 475 (PGGI…WRGV), and 476 to 523 (PSTL…WLVC). The tract at residues 537–571 (DAAEGPRAPPGQHDQSRSEDGYEVCSCTSGASSPP) is disordered. Residue serine 565 is the site of GPI-anchor amidated serine attachment. Residues 566 to 603 (GASSPPGAPGPLVAATMLLLLPPLSPGALWTAAQALTL) constitute a propeptide, removed in mature form.

This sequence belongs to the peptidase M10A family. Zn(2+) serves as cofactor. Ca(2+) is required as a cofactor. The precursor is cleaved by a furin endopeptidase. As to expression, expressed in brain, leukocytes, colon, ovary testis and breast cancer. Expressed also in many transformed and non-transformed cell types.

It is found in the cell membrane. The protein localises to the secreted. Its subcellular location is the extracellular space. It localises to the extracellular matrix. In terms of biological role, endopeptidase that degrades various components of the extracellular matrix, such as fibrin. May be involved in the activation of membrane-bound precursors of growth factors or inflammatory mediators, such as tumor necrosis factor-alpha. May also be involved in tumoral process. Cleaves pro-TNF-alpha at the '74-Ala-|-Gln-75' site. Not obvious if able to proteolytically activate progelatinase A. Does not hydrolyze collagen types I, II, III, IV and V, gelatin, fibronectin, laminin, decorin nor alpha1-antitrypsin. In Homo sapiens (Human), this protein is Matrix metalloproteinase-17 (MMP17).